Here is a 131-residue protein sequence, read N- to C-terminus: Large ribosomal subunit protein bL19 (131 aa).

It belongs to the bacterial ribosomal protein bL19 family.

Its function is as follows. This protein is located at the 30S-50S ribosomal subunit interface and may play a role in the structure and function of the aminoacyl-tRNA binding site. This is Large ribosomal subunit protein bL19 from Polynucleobacter necessarius subsp. necessarius (strain STIR1).